The following is a 1125-amino-acid chain: MVQKVLSRQSDNSQDVSAEQLDVVESGSIDQQNIRAWVVRKVKENDKRTSTNQSFKWEAVKPASCLDAANEKFMYLHGGREKSGISNSLFKLDLDSCTVYSHNRGEDNDSPARVGHSIVCSADTIYLFGGCDSETDSTFEVGDNSLYAYNFKSNQWNLVSTQSPLPSPRTGHSMLLVDSKLWIFGGECQGKYLNDIHLFDTKGVDRRTQSELKQKANANNVEKANMEFDETDWSWETPFLHSSSPPPRSNHSVTLVQGKIFVHGGHNDTGPLSDLWLFDLETLSWTEVRSIGRFPGPREGHQATTIDDTVYIYGGRDNKGLILNELWAFNYSQQRWSLVSNPIPILLSDSSSYKIVSKNNHILLLYLNALDAPKQLLCYEADPKNLYWDKDKFSDIPVLQHISMKPSNASNHTVSLGYLNDRPNHSKKNSVTSTSSSQFNNFLEQNQKAVRSARHRHYASLDEQGLHSLRNLSKTSGMNHSADFSLHEFGQADPFAYEIEKPIASLPLPNGNDTISRSSESSSPINESESNSLLKLQSDFKFSNSDDRVAWLEEQLLYCMQQGYTLKPPNLFQHVDEKLRLEKKEQLSYLEILKVIEQMLESNEQKFKKQIVSLASENAKLAAQRDAAVENANYSRSLIQKKTTDETVGSLIEKVGKLEYEVQGTLEEATSYYQKNTELQQLLKQNESASELLKSRNEKLCVDYDKLRSVFEEDSSKILSLQKENENLQSQILQISEELVDYRSRCEALEYGNYELETKLIEMHDRVEMQTNVIEASASALDVSNTAILSFEDSLRRERDEKSTLQQKCLNLQYEYENVRIELENLQSRALELESALEQSVSDAKYSKAIMQSGLSKLLSSINENKDNLKEFSKSKQKISYLESQLEGLHELLRESQRLCEGRTKELLNSQQKLYDLKHSYSSVMTEKSKLSDQVNDLTEQAKITQRKLSEVQIALADSKMNQQLSGKDSTDVHLPTDFSASSSPLRSYFNEEDSFNNASAAHSSKESDIPSGGVFTKYRNHFGNLMTSEETKAPDNNDLHKRLSDVINSQQKFLSLSPQVSKDYYDVRSKLNDTAGSFSGEEMRAIDDNYYASRIKQLEDDYQKAITYANCSDESFQQLSHSFM.

Kelch repeat units follow at residues 73–123 (FMYL…CSAD), 124–179 (TIYL…LVDS), 181–226 (LWIF…KANM), 259–308 (KIFV…TIDD), and 310–360 (VYIY…SKNN). S430, S437, S460, S523, S980, S982, S983, S984, S1078, and S1080 each carry phosphoserine. The segment at 507–530 (PLPNGNDTISRSSESSSPINESES) is disordered. A compositionally biased stretch (low complexity) spans 515 to 530 (ISRSSESSSPINESES).

The protein resides in the cell tip. Acts as a cell end marker required for efficient new end take-off (NETO), whereby growth is activated at the cell end to generate bipolarity in extending cells. Also required for proper placement of the septum. This is Tip elongation aberrant protein 3 (tea3) from Schizosaccharomyces pombe (strain 972 / ATCC 24843) (Fission yeast).